The following is a 447-amino-acid chain: Hemopexin (447 aa).

An N-terminal signal peptide occupies residues 1–18 (MRLIQALSLCLALSLSLA). Residues 20 to 44 (PPQHKEDHSHKGKPGGEGHKHELHH) form a disordered region. Basic and acidic residues predominate over residues 22–44 (QHKEDHSHKGKPGGEGHKHELHH). 8 Hemopexin repeats span residues 53-93 (GIEF…FPEL), 99-151 (LGHV…FPGI), 152-197 (PDHL…FKSM), 198-243 (PNCT…FMRC), 262-304 (RVHL…FKEL), 305-351 (HSEV…VLGI), 352-395 (EGPV…TITQ), and 396-441 (FKRI…VSQQ). N87 carries N-linked (GlcNAc...) asparagine glycosylation. N168 and N199 each carry an N-linked (GlcNAc...) asparagine glycan. H293 contributes to the heme binding site.

This sequence belongs to the hemopexin family.

The protein resides in the secreted. Binds heme and transports it to the liver for breakdown and iron recovery, after which the free hemopexin returns to the circulation. This chain is Hemopexin, found in Danio rerio (Zebrafish).